A 75-amino-acid chain; its full sequence is Ferredoxin-thioredoxin reductase, variable chain (75 aa).

Residues 43–46 (QGRP) form an interaction with ferredoxin region.

This sequence belongs to the ferredoxin thioredoxin reductase alpha subunit family. As to quaternary structure, heterodimer of subunit A (variable subunit) and subunit B (catalytic subunit). Heterodimeric FTR forms a complex with ferredoxin and thioredoxin.

Variable subunit of the ferredoxin-thioredoxin reductase (FTR), which catalyzes the two-electron reduction of thioredoxins by the electrons provided by reduced ferredoxin. The polypeptide is Ferredoxin-thioredoxin reductase, variable chain (ftrV) (Synechocystis sp. (strain ATCC 27184 / PCC 6803 / Kazusa)).